A 161-amino-acid polypeptide reads, in one-letter code: MQANSRTYFLLIAIVSFAMVGAALYMQYAENLQPCPLCIMQRFAFIGIGIFSLLAVIAQNTRTLWQGLGMLSGVGGIAVAGYQVALLMNPKASCGIDPLENWVNSLPTAKLLPQVFYSDGLCTAPTPPILGLSIPAWSLIWLLILTLTLAVGLIRREKHFR.

The Cytoplasmic portion of the chain corresponds to 1-8; the sequence is MQANSRTY. The helical transmembrane segment at 9-25 threads the bilayer; the sequence is FLLIAIVSFAMVGAALY. The Periplasmic segment spans residues 26–43; it reads MQYAENLQPCPLCIMQRF. A disulfide bridge connects residues Cys-35 and Cys-38. A helical membrane pass occupies residues 44 to 58; the sequence is AFIGIGIFSLLAVIA. The Cytoplasmic portion of the chain corresponds to 59–63; that stretch reads QNTRT. A helical transmembrane segment spans residues 64–81; it reads LWQGLGMLSGVGGIAVAG. The Periplasmic segment spans residues 82–136; it reads YQVALLMNPKASCGIDPLENWVNSLPTAKLLPQVFYSDGLCTAPTPPILGLSIPA. A disulfide bridge links Cys-94 with Cys-122. A helical transmembrane segment spans residues 137–155; it reads WSLIWLLILTLTLAVGLIR. The Cytoplasmic portion of the chain corresponds to 156-161; the sequence is REKHFR.

The protein belongs to the DsbB family.

It localises to the cell inner membrane. In terms of biological role, required for disulfide bond formation in some periplasmic proteins. Acts by oxidizing the DsbA protein. The chain is Disulfide bond formation protein B from Cupriavidus metallidurans (strain ATCC 43123 / DSM 2839 / NBRC 102507 / CH34) (Ralstonia metallidurans).